Reading from the N-terminus, the 90-residue chain is uncharacterized protein (90 aa).

A helical transmembrane segment spans residues 46–62 (MALLVVFLVSLFACTTI).

It is found in the membrane. This is an uncharacterized protein from Haemophilus influenzae (strain ATCC 51907 / DSM 11121 / KW20 / Rd).